The following is a 194-amino-acid chain: Peptidyl-tRNA hydrolase (194 aa).

Residue Tyr16 participates in tRNA binding. His21 (proton acceptor) is an active-site residue. TRNA contacts are provided by Tyr67, Asn69, and Asn115.

It belongs to the PTH family. As to quaternary structure, monomer.

The protein localises to the cytoplasm. The enzyme catalyses an N-acyl-L-alpha-aminoacyl-tRNA + H2O = an N-acyl-L-amino acid + a tRNA + H(+). Hydrolyzes ribosome-free peptidyl-tRNAs (with 1 or more amino acids incorporated), which drop off the ribosome during protein synthesis, or as a result of ribosome stalling. Functionally, catalyzes the release of premature peptidyl moieties from peptidyl-tRNA molecules trapped in stalled 50S ribosomal subunits, and thus maintains levels of free tRNAs and 50S ribosomes. The protein is Peptidyl-tRNA hydrolase of Synechocystis sp. (strain ATCC 27184 / PCC 6803 / Kazusa).